Here is a 318-residue protein sequence, read N- to C-terminus: Thymidylate synthase (318 aa).

DUMP is bound by residues R25 and 180–181 (RR). The Nucleophile role is filled by C200. DUMP contacts are provided by residues 220-223 (RSGD), N231, and 261-263 (HIY). (6R)-5,10-methylene-5,6,7,8-tetrahydrofolate is bound at residue D223. A317 contacts (6R)-5,10-methylene-5,6,7,8-tetrahydrofolate.

It belongs to the thymidylate synthase family. Bacterial-type ThyA subfamily. Homodimer.

The protein resides in the cytoplasm. The enzyme catalyses dUMP + (6R)-5,10-methylene-5,6,7,8-tetrahydrofolate = 7,8-dihydrofolate + dTMP. It participates in pyrimidine metabolism; dTTP biosynthesis. In terms of biological role, catalyzes the reductive methylation of 2'-deoxyuridine-5'-monophosphate (dUMP) to 2'-deoxythymidine-5'-monophosphate (dTMP) while utilizing 5,10-methylenetetrahydrofolate (mTHF) as the methyl donor and reductant in the reaction, yielding dihydrofolate (DHF) as a by-product. This enzymatic reaction provides an intracellular de novo source of dTMP, an essential precursor for DNA biosynthesis. This is Thymidylate synthase from Lactobacillus gasseri (strain ATCC 33323 / DSM 20243 / BCRC 14619 / CIP 102991 / JCM 1131 / KCTC 3163 / NCIMB 11718 / NCTC 13722 / AM63).